The primary structure comprises 314 residues: Nodulation protein D 2 (314 aa).

The HTH lysR-type domain occupies 6–63; it reads LDLNLLVVLDALMTERNLTAAARSINLSQPAMSAAVARLRTNFRDDLFAMAGREFIPT. The segment at residues 23 to 42 is a DNA-binding region (H-T-H motif); it reads LTAAARSINLSQPAMSAAVA.

This sequence belongs to the LysR transcriptional regulatory family.

Its function is as follows. NodD regulates the expression of the nodABCFE genes which encode other nodulation proteins. NodD is also a negative regulator of its own expression. Binds flavonoids as inducers. This chain is Nodulation protein D 2 (nodD2), found in Rhizobium tropici.